The sequence spans 165 residues: SsrA-binding protein (165 aa).

The span at 1 to 10 (MSKKGKKKSK) shows a compositional bias: basic residues. Residues 1 to 21 (MSKKGKKKSKNNSSVDGNRRL) are disordered.

The protein belongs to the SmpB family.

Its subcellular location is the cytoplasm. Its function is as follows. Required for rescue of stalled ribosomes mediated by trans-translation. Binds to transfer-messenger RNA (tmRNA), required for stable association of tmRNA with ribosomes. tmRNA and SmpB together mimic tRNA shape, replacing the anticodon stem-loop with SmpB. tmRNA is encoded by the ssrA gene; the 2 termini fold to resemble tRNA(Ala) and it encodes a 'tag peptide', a short internal open reading frame. During trans-translation Ala-aminoacylated tmRNA acts like a tRNA, entering the A-site of stalled ribosomes, displacing the stalled mRNA. The ribosome then switches to translate the ORF on the tmRNA; the nascent peptide is terminated with the 'tag peptide' encoded by the tmRNA and targeted for degradation. The ribosome is freed to recommence translation, which seems to be the essential function of trans-translation. In Prochlorococcus marinus (strain NATL1A), this protein is SsrA-binding protein.